The chain runs to 276 residues: Bis(5'-nucleosyl)-tetraphosphatase, symmetrical (276 aa).

It belongs to the Ap4A hydrolase family.

It carries out the reaction P(1),P(4)-bis(5'-adenosyl) tetraphosphate + H2O = 2 ADP + 2 H(+). Hydrolyzes diadenosine 5',5'''-P1,P4-tetraphosphate to yield ADP. The polypeptide is Bis(5'-nucleosyl)-tetraphosphatase, symmetrical (Mannheimia succiniciproducens (strain KCTC 0769BP / MBEL55E)).